A 329-amino-acid polypeptide reads, in one-letter code: GMP reductase (329 aa).

Residue C178 is the Thioimidate intermediate of the active site. 207–230 (IIADGGIRNNGDIAKSIRFGATMC) lines the NADP(+) pocket.

It belongs to the IMPDH/GMPR family. GuaC type 2 subfamily.

It catalyses the reaction IMP + NH4(+) + NADP(+) = GMP + NADPH + 2 H(+). Its function is as follows. Catalyzes the irreversible NADPH-dependent deamination of GMP to IMP. It functions in the conversion of nucleobase, nucleoside and nucleotide derivatives of G to A nucleotides, and in maintaining the intracellular balance of A and G nucleotides. In Lacticaseibacillus paracasei (strain ATCC 334 / BCRC 17002 / CCUG 31169 / CIP 107868 / KCTC 3260 / NRRL B-441) (Lactobacillus paracasei), this protein is GMP reductase.